A 197-amino-acid chain; its full sequence is Dermorphin-1 (197 aa).

Residues 1 to 20 form the signal peptide; it reads MSFLKKSLLLILFLGLVSLS. Positions 21-45 are excised as a propeptide; sequence VCKEEKRETEEENENEENHEEGSEM. Residues 24–197 form a disordered region; it reads EEKRETEEEN…GYPSGEAKKM (174 aa). Over residues 30–39 the composition is skewed to acidic residues; the sequence is EEENENEENH. Residues 40–62 show a composition bias toward basic and acidic residues; the sequence is EEGSEMKRYMFHLMDGEAKKRDS. Methionine 49 carries the post-translational modification D-methionine. The residue at position 54 (aspartate 54) is an Aspartic acid 1-amide. Positions 56 to 77 are excised as a propeptide; it reads EAKKRDSEENEIEENHEEGSEM. Alanine 81 carries the D-alanine (Ala) modification. Serine 86 bears the Serine amide mark. Positions 88–97 are enriched in basic and acidic residues; the sequence is EAKKIKRVSE. Residues 88 to 112 constitute a propeptide that is removed on maturation; the sequence is EAKKIKRVSEEENENEENHEEGSEM. Alanine 116 is modified (D-alanine (Ala)). Serine 121 bears the Serine amide mark. A compositionally biased stretch (basic and acidic residues) spans 123-132; the sequence is EAKKIKRESE. The propeptide occupies 123-147; sequence EAKKIKRESEEEKEIEENHEEGSEM. Alanine 151 is modified (D-alanine (Ala)). The residue at position 156 (serine 156) is a Serine amide. Positions 158-182 are excised as a propeptide; the sequence is EAKKIKRESEEENENEENHEEGSEM. Residues 167–176 are compositionally biased toward acidic residues; the sequence is EEENENEENH. Alanine 186 bears the D-alanine (Ala) mark. Serine 191 carries the post-translational modification Serine amide. Residues 193 to 197 constitute a propeptide that is removed on maturation; sequence EAKKM.

This sequence belongs to the frog skin active peptide (FSAP) family. Dermorphin subfamily. As to expression, expressed by the skin glands.

It localises to the secreted. Its function is as follows. Dermorphin has a very potent opiate-like activity. It has high affinity and selectivity for mu-type opioid receptors. Deltorphin has a very potent opiate-like activity. It has high affinity and selectivity for delta-type opioid receptors. The polypeptide is Dermorphin-1 (Phyllomedusa sauvagei (Sauvage's leaf frog)).